A 199-amino-acid polypeptide reads, in one-letter code: Probable molybdenum cofactor guanylyltransferase (199 aa).

Residues 6 to 8 (LAG), Lys18, Asp65, and Asp97 contribute to the GTP site. Asp97 provides a ligand contact to Mg(2+).

It belongs to the MobA family. The cofactor is Mg(2+).

The protein localises to the cytoplasm. It catalyses the reaction Mo-molybdopterin + GTP + H(+) = Mo-molybdopterin guanine dinucleotide + diphosphate. Functionally, transfers a GMP moiety from GTP to Mo-molybdopterin (Mo-MPT) cofactor (Moco or molybdenum cofactor) to form Mo-molybdopterin guanine dinucleotide (Mo-MGD) cofactor. This chain is Probable molybdenum cofactor guanylyltransferase, found in Staphylococcus aureus (strain Mu50 / ATCC 700699).